We begin with the raw amino-acid sequence, 329 residues long: Short-chain dehydrogenase/reductase tropG (329 aa).

Residues lysine 57, aspartate 86, asparagine 113, tyrosine 203, and lysine 207 each coordinate NADP(+). The Proton acceptor role is filled by tyrosine 203. Lysine 207 acts as the Lowers pKa of active site Tyr in catalysis.

It belongs to the short-chain dehydrogenases/reductases (SDR) family.

It participates in secondary metabolite biosynthesis. Functionally, short-chain dehydrogenase/reductase; part of the gene cluster that mediates the biosynthesis of the tropolone class of fungal maleic anhydrides. The pathway begins with the synthesis of 3-methylorcinaldehyde by the non-reducing polyketide synthase (PKS) tropA. 3-methylorcinaldehyde is the substrate for the FAD-dependent monooxygenase tropB to yield a dearomatized hydroxycyclohexadione. The 2-oxoglutarate-dependent dioxygenase tropC then performs the oxidative ring expansion to provide the first tropolone metabolite stipitaldehyde. Trop D converts stipitaldehyde into stipitacetal which is in turn converted to stipitalide by the short-chain dehydrogenase/reductase tropE. The next steps involve tropF, tropG, tropH, tropI and tropJ to form successive tropolone maleic anhydrides including stipitaldehydic, stipitatonic and stipitatic acids. The polypeptide is Short-chain dehydrogenase/reductase tropG (Talaromyces stipitatus (strain ATCC 10500 / CBS 375.48 / QM 6759 / NRRL 1006) (Penicillium stipitatum)).